A 380-amino-acid chain; its full sequence is Cytochrome b (380 aa).

The next 4 membrane-spanning stretches (helical) occupy residues phenylalanine 34–methionine 54, tryptophan 78–isoleucine 99, tryptophan 114–leucine 134, and phenylalanine 179–threonine 199. Heme b is bound by residues histidine 84 and histidine 98. Heme b-binding residues include histidine 183 and histidine 197. A ubiquinone is bound at residue histidine 202. 4 helical membrane-spanning segments follow: residues threonine 227 to serine 247, leucine 289 to histidine 309, leucine 321 to serine 341, and phenylalanine 348 to proline 368.

This sequence belongs to the cytochrome b family. In terms of assembly, the cytochrome bc1 complex contains 11 subunits: 3 respiratory subunits (MT-CYB, CYC1 and UQCRFS1), 2 core proteins (UQCRC1 and UQCRC2) and 6 low-molecular weight proteins (UQCRH/QCR6, UQCRB/QCR7, UQCRQ/QCR8, UQCR10/QCR9, UQCR11/QCR10 and a cleavage product of UQCRFS1). This cytochrome bc1 complex then forms a dimer. It depends on heme b as a cofactor.

Its subcellular location is the mitochondrion inner membrane. In terms of biological role, component of the ubiquinol-cytochrome c reductase complex (complex III or cytochrome b-c1 complex) that is part of the mitochondrial respiratory chain. The b-c1 complex mediates electron transfer from ubiquinol to cytochrome c. Contributes to the generation of a proton gradient across the mitochondrial membrane that is then used for ATP synthesis. The sequence is that of Cytochrome b (MT-CYB) from Pygoscelis antarcticus (Chinstrap penguin).